A 102-amino-acid polypeptide reads, in one-letter code: Putative defensin-like protein 298 (102 aa).

Positions 1-29 (MSASKATMLILFALFLSDILLVSIPRAEA) are cleaved as a signal peptide. 6 cysteine pairs are disulfide-bonded: cysteine 35–cysteine 53, cysteine 41–cysteine 58, cysteine 46–cysteine 60, cysteine 74–cysteine 93, cysteine 80–cysteine 98, and cysteine 86–cysteine 100.

This sequence belongs to the DEFL family.

It is found in the secreted. The polypeptide is Putative defensin-like protein 298 (Arabidopsis thaliana (Mouse-ear cress)).